Here is a 241-residue protein sequence, read N- to C-terminus: Orotidine 5'-phosphate decarboxylase (241 aa).

Residues aspartate 15, lysine 36, aspartate 63 to threonine 72, threonine 127, arginine 189, glutamine 198, glycine 218, and arginine 219 contribute to the substrate site. Lysine 65 acts as the Proton donor in catalysis.

Belongs to the OMP decarboxylase family. Type 1 subfamily. In terms of assembly, homodimer.

It carries out the reaction orotidine 5'-phosphate + H(+) = UMP + CO2. It functions in the pathway pyrimidine metabolism; UMP biosynthesis via de novo pathway; UMP from orotate: step 2/2. In terms of biological role, catalyzes the decarboxylation of orotidine 5'-monophosphate (OMP) to uridine 5'-monophosphate (UMP). The polypeptide is Orotidine 5'-phosphate decarboxylase (Prochlorococcus marinus (strain MIT 9211)).